Consider the following 43-residue polypeptide: Potassium channel toxin gamma-KTx 3.3 (43 aa).

Intrachain disulfides connect Cys-5–Cys-23, Cys-11–Cys-34, Cys-20–Cys-39, and Cys-24–Cys-41.

Belongs to the ergtoxin family. Gamma-KTx 3 subfamily. As to expression, expressed by the venom gland.

The protein localises to the secreted. Blocks Kv11/ERG potassium channels. This Centruroides sculpturatus (Arizona bark scorpion) protein is Potassium channel toxin gamma-KTx 3.3.